The following is a 312-amino-acid chain: Plasma membrane-associated coenzyme Q6 reductase PGA3 (312 aa).

Over Met-1–Pro-15 the chain is Extracellular. The helical transmembrane segment at Val-16 to Met-36 threads the bilayer. Residues Ser-37–Glu-39 are Cytoplasmic-facing. A helical transmembrane segment spans residues Leu-40 to Ala-60. Over Tyr-61 to His-179 the chain is Extracellular. The FAD-binding FR-type domain maps to Asp-70–Glu-173. Residues Ala-153–Gly-168 and His-179–Leu-211 contribute to the FAD site. A helical membrane pass occupies residues Leu-180–Ile-200. Residues Thr-201 to Phe-312 are Cytoplasmic-facing.

It belongs to the flavoprotein pyridine nucleotide cytochrome reductase family. The cofactor is FAD.

The protein localises to the cell membrane. It localises to the endoplasmic reticulum membrane. The enzyme catalyses 2 Fe(III)-[cytochrome b5] + NADH = 2 Fe(II)-[cytochrome b5] + NAD(+) + H(+). Inhibited by diphenylene iodonium (DPI). NADH-dependent cytochrome b5 reductase that reduces coenzyme Q6 at the plasma membrane and mediates lifespan extension by calorie restriction by shifting fermentative to respiratory metabolism, probably through modulating the NAD(+)/NADH ratio. In Saccharomyces cerevisiae (strain ATCC 204508 / S288c) (Baker's yeast), this protein is Plasma membrane-associated coenzyme Q6 reductase PGA3 (PGA3).